A 264-amino-acid polypeptide reads, in one-letter code: MDNRPIGFLDSGVGGLTVVRELMRQLPHESIVYVGDSARAPYGPRPADQIREFTWELVNFLLTKNVKMIVFACNTATAVAWEEVKNALSIPVLGVILPGSSAAIKSTTSGKVGVIGTPMTIQSDIYRQKIQLLAPQIEVLSLACPKFVPIVESNETKSSVAKKIVYETLEPLVGKVDTLVLGCTHYPLLRPIIQNVMGSEVTLIDSGAECIRDISVLLNYFQINASREEKKADNLFFTTAGTDTFKEIANAWLEESIDVEHTDL.

Substrate-binding positions include 10 to 11 (DS) and 42 to 43 (YG). Cys-73 serves as the catalytic Proton donor/acceptor. 74-75 (NT) is a binding site for substrate. Cys-183 (proton donor/acceptor) is an active-site residue. 184 to 185 (TH) serves as a coordination point for substrate.

This sequence belongs to the aspartate/glutamate racemases family.

The enzyme catalyses L-glutamate = D-glutamate. It participates in cell wall biogenesis; peptidoglycan biosynthesis. Provides the (R)-glutamate required for cell wall biosynthesis. This chain is Glutamate racemase, found in Streptococcus uberis (strain ATCC BAA-854 / 0140J).